A 275-amino-acid polypeptide reads, in one-letter code: tRNA uridine(34) hydroxylase (275 aa).

The Rhodanese domain occupies 122 to 218; it reads SRSDVYTIDT…YFKSTQNKNS (97 aa). Cys178 functions as the Cysteine persulfide intermediate in the catalytic mechanism.

It belongs to the TrhO family.

It carries out the reaction uridine(34) in tRNA + AH2 + O2 = 5-hydroxyuridine(34) in tRNA + A + H2O. Its function is as follows. Catalyzes oxygen-dependent 5-hydroxyuridine (ho5U) modification at position 34 in tRNAs. The protein is tRNA uridine(34) hydroxylase of Ehrlichia chaffeensis (strain ATCC CRL-10679 / Arkansas).